A 315-amino-acid polypeptide reads, in one-letter code: Acetyl-coenzyme A carboxylase carboxyl transferase subunit alpha (315 aa).

The CoA carboxyltransferase C-terminal domain maps to 40-293 (LQDKSKTLTE…REELSSQLAM (254 aa)).

It belongs to the AccA family. In terms of assembly, acetyl-CoA carboxylase is a heterohexamer composed of biotin carboxyl carrier protein (AccB), biotin carboxylase (AccC) and two subunits each of ACCase subunit alpha (AccA) and ACCase subunit beta (AccD).

The protein localises to the cytoplasm. It carries out the reaction N(6)-carboxybiotinyl-L-lysyl-[protein] + acetyl-CoA = N(6)-biotinyl-L-lysyl-[protein] + malonyl-CoA. Its pathway is lipid metabolism; malonyl-CoA biosynthesis; malonyl-CoA from acetyl-CoA: step 1/1. Its function is as follows. Component of the acetyl coenzyme A carboxylase (ACC) complex. First, biotin carboxylase catalyzes the carboxylation of biotin on its carrier protein (BCCP) and then the CO(2) group is transferred by the carboxyltransferase to acetyl-CoA to form malonyl-CoA. This is Acetyl-coenzyme A carboxylase carboxyl transferase subunit alpha from Pseudomonas syringae pv. syringae (strain B728a).